We begin with the raw amino-acid sequence, 250 residues long: Tryptophan synthase alpha chain (250 aa).

Residues Glu31 and Asp42 each act as proton acceptor in the active site.

This sequence belongs to the TrpA family. In terms of assembly, tetramer of two alpha and two beta chains.

The catalysed reaction is (1S,2R)-1-C-(indol-3-yl)glycerol 3-phosphate + L-serine = D-glyceraldehyde 3-phosphate + L-tryptophan + H2O. The protein operates within amino-acid biosynthesis; L-tryptophan biosynthesis; L-tryptophan from chorismate: step 5/5. Its function is as follows. The alpha subunit is responsible for the aldol cleavage of indoleglycerol phosphate to indole and glyceraldehyde 3-phosphate. This Staphylococcus carnosus (strain TM300) protein is Tryptophan synthase alpha chain.